The primary structure comprises 253 residues: Glutamate racemase (253 aa).

Residues aspartate 7 to serine 8 and tyrosine 39 to glycine 40 each bind substrate. Cysteine 70 (proton donor/acceptor) is an active-site residue. Asparagine 71–serine 72 is a binding site for substrate. Residue cysteine 179 is the Proton donor/acceptor of the active site. Threonine 180–histidine 181 is a binding site for substrate.

The protein belongs to the aspartate/glutamate racemases family.

It catalyses the reaction L-glutamate = D-glutamate. The protein operates within cell wall biogenesis; peptidoglycan biosynthesis. Its function is as follows. Provides the (R)-glutamate required for cell wall biosynthesis. This is Glutamate racemase from Nitratiruptor sp. (strain SB155-2).